A 602-amino-acid polypeptide reads, in one-letter code: Isocyanide synthase A (602 aa).

It belongs to the isocyanide synthase family.

In terms of biological role, isocyanide synthase involved in the biosynthesis of isocyanides (or isonitriles), a class of microbial secondary metabolites. The presence of an isonitrile moiety within a compound imparts unique biological (cytotoxic, antibacterial, and antiprotozoal) and chemical (transition metal coordination) properties and enables synthetic and biochemical applications. This is Isocyanide synthase A from Aspergillus fumigatus (strain ATCC MYA-4609 / CBS 101355 / FGSC A1100 / Af293) (Neosartorya fumigata).